Here is a 166-residue protein sequence, read N- to C-terminus: Crossover junction endodeoxyribonuclease RuvC (166 aa).

Residues Asp-7, Glu-67, and Asp-140 contribute to the active site. Asp-7, Glu-67, and Asp-140 together coordinate Mg(2+).

The protein belongs to the RuvC family. As to quaternary structure, homodimer which binds Holliday junction (HJ) DNA. The HJ becomes 2-fold symmetrical on binding to RuvC with unstacked arms; it has a different conformation from HJ DNA in complex with RuvA. In the full resolvosome a probable DNA-RuvA(4)-RuvB(12)-RuvC(2) complex forms which resolves the HJ. The cofactor is Mg(2+).

The protein resides in the cytoplasm. The catalysed reaction is Endonucleolytic cleavage at a junction such as a reciprocal single-stranded crossover between two homologous DNA duplexes (Holliday junction).. Functionally, the RuvA-RuvB-RuvC complex processes Holliday junction (HJ) DNA during genetic recombination and DNA repair. Endonuclease that resolves HJ intermediates. Cleaves cruciform DNA by making single-stranded nicks across the HJ at symmetrical positions within the homologous arms, yielding a 5'-phosphate and a 3'-hydroxyl group; requires a central core of homology in the junction. The consensus cleavage sequence is 5'-(A/T)TT(C/G)-3'. Cleavage occurs on the 3'-side of the TT dinucleotide at the point of strand exchange. HJ branch migration catalyzed by RuvA-RuvB allows RuvC to scan DNA until it finds its consensus sequence, where it cleaves and resolves the cruciform DNA. The polypeptide is Crossover junction endodeoxyribonuclease RuvC (Brevibacillus brevis (strain 47 / JCM 6285 / NBRC 100599)).